The sequence spans 129 residues: Iron-sulfur cluster assembly 1 homolog, mitochondrial (129 aa).

Residues Met1 to Ala12 constitute a mitochondrion transit peptide. Residues Cys57, Cys121, and Cys123 each contribute to the Fe cation site.

Belongs to the HesB/IscA family.

The protein localises to the mitochondrion. Involved in the maturation of mitochondrial 4Fe-4S proteins functioning late in the iron-sulfur cluster assembly pathway. Probably involved in the binding of an intermediate of Fe/S cluster assembly. The polypeptide is Iron-sulfur cluster assembly 1 homolog, mitochondrial (ISCA1) (Gallus gallus (Chicken)).